The sequence spans 202 residues: Orotate phosphoribosyltransferase (202 aa).

Residues Lys-93 and 113–121 (EDIITTGGS) contribute to the 5-phospho-alpha-D-ribose 1-diphosphate site. Orotate is bound by residues Thr-117 and Arg-145.

This sequence belongs to the purine/pyrimidine phosphoribosyltransferase family. PyrE subfamily. As to quaternary structure, homodimer. Mg(2+) is required as a cofactor.

The enzyme catalyses orotidine 5'-phosphate + diphosphate = orotate + 5-phospho-alpha-D-ribose 1-diphosphate. It functions in the pathway pyrimidine metabolism; UMP biosynthesis via de novo pathway; UMP from orotate: step 1/2. Its function is as follows. Catalyzes the transfer of a ribosyl phosphate group from 5-phosphoribose 1-diphosphate to orotate, leading to the formation of orotidine monophosphate (OMP). This Campylobacter jejuni subsp. doylei (strain ATCC BAA-1458 / RM4099 / 269.97) protein is Orotate phosphoribosyltransferase.